The primary structure comprises 334 residues: Aspartate carbamoyltransferase catalytic subunit (334 aa).

The carbamoyl phosphate site is built by Arg-71 and Thr-72. Lys-99 is an L-aspartate binding site. Arg-121, His-151, and Gln-154 together coordinate carbamoyl phosphate. Arg-184 and Arg-239 together coordinate L-aspartate. Carbamoyl phosphate-binding residues include Gly-280 and Pro-281.

It belongs to the aspartate/ornithine carbamoyltransferase superfamily. ATCase family. In terms of assembly, heterododecamer (2C3:3R2) of six catalytic PyrB chains organized as two trimers (C3), and six regulatory PyrI chains organized as three dimers (R2).

It catalyses the reaction carbamoyl phosphate + L-aspartate = N-carbamoyl-L-aspartate + phosphate + H(+). Its pathway is pyrimidine metabolism; UMP biosynthesis via de novo pathway; (S)-dihydroorotate from bicarbonate: step 2/3. In terms of biological role, catalyzes the condensation of carbamoyl phosphate and aspartate to form carbamoyl aspartate and inorganic phosphate, the committed step in the de novo pyrimidine nucleotide biosynthesis pathway. The polypeptide is Aspartate carbamoyltransferase catalytic subunit (Pseudomonas fluorescens (strain SBW25)).